We begin with the raw amino-acid sequence, 247 residues long: Small ribosomal subunit protein uS2 (247 aa).

Belongs to the universal ribosomal protein uS2 family.

In Fusobacterium nucleatum subsp. nucleatum (strain ATCC 25586 / DSM 15643 / BCRC 10681 / CIP 101130 / JCM 8532 / KCTC 2640 / LMG 13131 / VPI 4355), this protein is Small ribosomal subunit protein uS2.